A 700-amino-acid polypeptide reads, in one-letter code: Elongation factor G (700 aa).

The tr-type G domain maps to 8–290 (ERYRNIGISA…AVVEFMPSPV (283 aa)). GTP-binding positions include 17–24 (AHIDAGKT), 88–92 (DTPGH), and 142–145 (NKMD).

The protein belongs to the TRAFAC class translation factor GTPase superfamily. Classic translation factor GTPase family. EF-G/EF-2 subfamily.

It is found in the cytoplasm. Functionally, catalyzes the GTP-dependent ribosomal translocation step during translation elongation. During this step, the ribosome changes from the pre-translocational (PRE) to the post-translocational (POST) state as the newly formed A-site-bound peptidyl-tRNA and P-site-bound deacylated tRNA move to the P and E sites, respectively. Catalyzes the coordinated movement of the two tRNA molecules, the mRNA and conformational changes in the ribosome. The sequence is that of Elongation factor G from Albidiferax ferrireducens (strain ATCC BAA-621 / DSM 15236 / T118) (Rhodoferax ferrireducens).